A 199-amino-acid chain; its full sequence is Holliday junction branch migration complex subunit RuvA (199 aa).

The segment at Met-1–Arg-64 is domain I. The tract at residues Thr-65 to Glu-143 is domain II. The tract at residues Ala-144 to Ala-154 is flexible linker. The domain III stretch occupies residues Ala-154 to Lys-199.

It belongs to the RuvA family. As to quaternary structure, homotetramer. Forms an RuvA(8)-RuvB(12)-Holliday junction (HJ) complex. HJ DNA is sandwiched between 2 RuvA tetramers; dsDNA enters through RuvA and exits via RuvB. An RuvB hexamer assembles on each DNA strand where it exits the tetramer. Each RuvB hexamer is contacted by two RuvA subunits (via domain III) on 2 adjacent RuvB subunits; this complex drives branch migration. In the full resolvosome a probable DNA-RuvA(4)-RuvB(12)-RuvC(2) complex forms which resolves the HJ.

Its subcellular location is the cytoplasm. Its function is as follows. The RuvA-RuvB-RuvC complex processes Holliday junction (HJ) DNA during genetic recombination and DNA repair, while the RuvA-RuvB complex plays an important role in the rescue of blocked DNA replication forks via replication fork reversal (RFR). RuvA specifically binds to HJ cruciform DNA, conferring on it an open structure. The RuvB hexamer acts as an ATP-dependent pump, pulling dsDNA into and through the RuvAB complex. HJ branch migration allows RuvC to scan DNA until it finds its consensus sequence, where it cleaves and resolves the cruciform DNA. The sequence is that of Holliday junction branch migration complex subunit RuvA from Geobacter metallireducens (strain ATCC 53774 / DSM 7210 / GS-15).